The chain runs to 244 residues: E3 ubiquitin-protein ligase RNF166 (244 aa).

Residues 10–30 (AQRPQAPGPGPPRPPPPAGPA) form a disordered region. The span at 15–28 (APGPGPPRPPPPAG) shows a compositional bias: pro residues. Residues 40–80 (CPICLEVFHRAVGIAGCGHTFCGECLQPCLQVPSPLCPLCR) form an RING-type zinc finger. Cys105, Cys108, His120, and Cys124 together coordinate Zn(2+). Residues 105 to 124 (CRGCSKKVTLAKMRSHVSSC) form a C2HC RNF-type zinc finger. Positions 228-244 (DEEAALQAALALSLSEN) constitute a UIM domain.

It is found in the cytoplasm. The catalysed reaction is S-ubiquitinyl-[E2 ubiquitin-conjugating enzyme]-L-cysteine + [acceptor protein]-L-lysine = [E2 ubiquitin-conjugating enzyme]-L-cysteine + N(6)-ubiquitinyl-[acceptor protein]-L-lysine.. It participates in protein modification; protein ubiquitination. In terms of biological role, E3 ubiquitin-protein ligase that promotes the ubiquitination of different substrates. The protein is E3 ubiquitin-protein ligase RNF166 (RNF166) of Gallus gallus (Chicken).